A 392-amino-acid polypeptide reads, in one-letter code: 23S rRNA (uracil(747)-C(5))-methyltransferase RlmC (392 aa).

The [4Fe-4S] cluster site is built by cysteine 4, cysteine 12, cysteine 15, and cysteine 93. The S-adenosyl-L-methionine site is built by glutamine 218, phenylalanine 247, glutamate 275, and asparagine 321. Cysteine 348 (nucleophile) is an active-site residue.

It belongs to the class I-like SAM-binding methyltransferase superfamily. RNA M5U methyltransferase family. RlmC subfamily.

The enzyme catalyses uridine(747) in 23S rRNA + S-adenosyl-L-methionine = 5-methyluridine(747) in 23S rRNA + S-adenosyl-L-homocysteine + H(+). Functionally, catalyzes the formation of 5-methyl-uridine at position 747 (m5U747) in 23S rRNA. This Haemophilus influenzae (strain ATCC 51907 / DSM 11121 / KW20 / Rd) protein is 23S rRNA (uracil(747)-C(5))-methyltransferase RlmC.